Consider the following 320-residue polypeptide: Aspartate carbamoyltransferase catalytic subunit (320 aa).

Carbamoyl phosphate-binding residues include arginine 53 and threonine 54. Lysine 82 is an L-aspartate binding site. Carbamoyl phosphate contacts are provided by arginine 103, histidine 131, and glutamine 134. 2 residues coordinate L-aspartate: arginine 164 and arginine 227. Carbamoyl phosphate-binding residues include leucine 266 and proline 267.

Belongs to the aspartate/ornithine carbamoyltransferase superfamily. ATCase family. In terms of assembly, heterododecamer (2C3:3R2) of six catalytic PyrB chains organized as two trimers (C3), and six regulatory PyrI chains organized as three dimers (R2).

The catalysed reaction is carbamoyl phosphate + L-aspartate = N-carbamoyl-L-aspartate + phosphate + H(+). It participates in pyrimidine metabolism; UMP biosynthesis via de novo pathway; (S)-dihydroorotate from bicarbonate: step 2/3. In terms of biological role, catalyzes the condensation of carbamoyl phosphate and aspartate to form carbamoyl aspartate and inorganic phosphate, the committed step in the de novo pyrimidine nucleotide biosynthesis pathway. The chain is Aspartate carbamoyltransferase catalytic subunit from Bifidobacterium longum subsp. infantis (strain ATCC 15697 / DSM 20088 / JCM 1222 / NCTC 11817 / S12).